A 448-amino-acid polypeptide reads, in one-letter code: tRNA(Ile)-lysidine synthase (448 aa).

An ATP-binding site is contributed by 27 to 32 (SGGVDS).

Belongs to the tRNA(Ile)-lysidine synthase family.

The protein localises to the cytoplasm. It carries out the reaction cytidine(34) in tRNA(Ile2) + L-lysine + ATP = lysidine(34) in tRNA(Ile2) + AMP + diphosphate + H(+). Ligates lysine onto the cytidine present at position 34 of the AUA codon-specific tRNA(Ile) that contains the anticodon CAU, in an ATP-dependent manner. Cytidine is converted to lysidine, thus changing the amino acid specificity of the tRNA from methionine to isoleucine. The sequence is that of tRNA(Ile)-lysidine synthase from Vibrio campbellii (strain ATCC BAA-1116).